We begin with the raw amino-acid sequence, 128 residues long: UPF0325 protein NT01EI_0832 (128 aa).

This sequence belongs to the UPF0325 family.

The polypeptide is UPF0325 protein NT01EI_0832 (Edwardsiella ictaluri (strain 93-146)).